The primary structure comprises 359 residues: S-adenosylmethionine:tRNA ribosyltransferase-isomerase (359 aa).

It belongs to the QueA family. Monomer.

The protein resides in the cytoplasm. It catalyses the reaction 7-aminomethyl-7-carbaguanosine(34) in tRNA + S-adenosyl-L-methionine = epoxyqueuosine(34) in tRNA + adenine + L-methionine + 2 H(+). Its pathway is tRNA modification; tRNA-queuosine biosynthesis. In terms of biological role, transfers and isomerizes the ribose moiety from AdoMet to the 7-aminomethyl group of 7-deazaguanine (preQ1-tRNA) to give epoxyqueuosine (oQ-tRNA). The protein is S-adenosylmethionine:tRNA ribosyltransferase-isomerase of Colwellia psychrerythraea (strain 34H / ATCC BAA-681) (Vibrio psychroerythus).